Reading from the N-terminus, the 184-residue chain is Nucleoporin-62 C-terminal-like protein (184 aa).

Residues 117 to 151 adopt a coiled-coil conformation; the sequence is RILHGEVNKVKLDQKRLEQELDFILSQQQELEFLL.

The protein belongs to the nucleoporin NSP1/NUP62 family.

This is Nucleoporin-62 C-terminal-like protein (NUP62CL) from Homo sapiens (Human).